A 333-amino-acid chain; its full sequence is Replication factor C subunit 2 (333 aa).

A2 is modified (N-acetylalanine). 55–62 (GPPGTGKT) serves as a coordination point for ATP.

The protein belongs to the activator 1 small subunits family. In terms of assembly, heterotetramer of subunits RFC2, RFC3, RFC4 and RFC5 that can form a complex with RFC1.

The protein resides in the nucleus. Functionally, may be involved in DNA replication and thus regulate cell proliferation. This chain is Replication factor C subunit 2 (RFC2), found in Arabidopsis thaliana (Mouse-ear cress).